Reading from the N-terminus, the 193-residue chain is Imidazoleglycerol-phosphate dehydratase (193 aa).

It belongs to the imidazoleglycerol-phosphate dehydratase family.

It is found in the cytoplasm. The enzyme catalyses D-erythro-1-(imidazol-4-yl)glycerol 3-phosphate = 3-(imidazol-4-yl)-2-oxopropyl phosphate + H2O. Its pathway is amino-acid biosynthesis; L-histidine biosynthesis; L-histidine from 5-phospho-alpha-D-ribose 1-diphosphate: step 6/9. This Saccharolobus solfataricus (strain ATCC 35092 / DSM 1617 / JCM 11322 / P2) (Sulfolobus solfataricus) protein is Imidazoleglycerol-phosphate dehydratase (hisB).